The chain runs to 167 residues: Modulator of smoothened protein (167 aa).

The next 4 helical transmembrane spans lie at I7–I29, T68–I88, W101–F121, and V139–F159.

It localises to the cell projection. The protein localises to the cilium membrane. Its subcellular location is the cell membrane. In terms of biological role, acts as a negative regulator of hedgehog signaling probably by promoting internalization and subsequent degradation of smoothened protein (SMO) present in the ciliary membrane. Plays a role in sonic hedgehog (SHH)-induced spinal neural progenitor cells differentiation. The polypeptide is Modulator of smoothened protein (Danio rerio (Zebrafish)).